The sequence spans 736 residues: Elongation factor 2 (736 aa).

Residues 18 to 234 (TRVRNIGIIA…VIDAYTASDK (217 aa)) form the tr-type G domain. GTP-binding positions include 27–34 (AHVDHGKT), 93–97 (DTPGH), and 147–150 (NKVD). Residue His-603 is modified to Diphthamide.

This sequence belongs to the TRAFAC class translation factor GTPase superfamily. Classic translation factor GTPase family. EF-G/EF-2 subfamily.

It localises to the cytoplasm. In terms of biological role, catalyzes the GTP-dependent ribosomal translocation step during translation elongation. During this step, the ribosome changes from the pre-translocational (PRE) to the post-translocational (POST) state as the newly formed A-site-bound peptidyl-tRNA and P-site-bound deacylated tRNA move to the P and E sites, respectively. Catalyzes the coordinated movement of the two tRNA molecules, the mRNA and conformational changes in the ribosome. In Saccharolobus islandicus (strain Y.N.15.51 / Yellowstone #2) (Sulfolobus islandicus), this protein is Elongation factor 2.